We begin with the raw amino-acid sequence, 208 residues long: Large ribosomal subunit protein bL25 (208 aa).

The protein belongs to the bacterial ribosomal protein bL25 family. CTC subfamily. Part of the 50S ribosomal subunit; part of the 5S rRNA/L5/L18/L25 subcomplex. Contacts the 5S rRNA. Binds to the 5S rRNA independently of L5 and L18.

In terms of biological role, this is one of the proteins that binds to the 5S RNA in the ribosome where it forms part of the central protuberance. In Paracoccus denitrificans (strain Pd 1222), this protein is Large ribosomal subunit protein bL25.